We begin with the raw amino-acid sequence, 654 residues long: Meiotically up-regulated gene 24 protein (654 aa).

Residues 299–355 form the RRM 1 domain; sequence RNVFIGNLPSSYHEKEIEEAFGKFGKIEHIKILSKKNIAFVHFLNIRDAIKVVRTLS. The interval 383-404 is disordered; it reads SCFTSKQNPDTTSDRCRQQESK. Positions 384 to 393 are enriched in polar residues; the sequence is CFTSKQNPDT. Residues 394-404 show a composition bias toward basic and acidic residues; sequence TSDRCRQQESK. 2 consecutive RRM domains span residues 409–482 and 500–571; these read RTVF…WGKE and RNVY…YAPD.

The protein localises to the cytoplasm. Has a role in meiosis. This Schizosaccharomyces pombe (strain 972 / ATCC 24843) (Fission yeast) protein is Meiotically up-regulated gene 24 protein (mug24).